An 840-amino-acid polypeptide reads, in one-letter code: Intracellular phospholipase A1 (840 aa).

2 disordered regions span residues 1–142 (MSGS…RRRK) and 666–718 (KKNK…AANA). Positions 26–39 (GKVKQKEKPKEKQM) are enriched in basic and acidic residues. Residues 97 to 111 (SRPSGLPSNGNPGSS) are compositionally biased toward low complexity. A DDHD domain is found at 564 to 827 (LEFKVKYLFA…ALFLANVLYC (264 aa)). Over residues 668–680 (NKDDKTADARSGG) the composition is skewed to basic and acidic residues. A compositionally biased stretch (acidic residues) spans 681 to 694 (DDENEDEDECDSDE).

This sequence belongs to the PA-PLA1 family.

The enzyme catalyses 1,2-dihexadecanoyl-sn-glycero-3-phospho-(1D-myo-inositol) + H2O = 2-hexadecanoyl-sn-glycero-3-phospho-(1D-myo-inositol) + hexadecanoate + H(+). It catalyses the reaction a 1,2-diacyl-sn-glycero-3-phospho-L-serine + H2O = a 2-acyl-sn-glycero-3-phospho-L-serine + a fatty acid + H(+). The catalysed reaction is 1-hexadecanoyl-2-(9Z-octadecenoyl)-sn-glycero-3-phospho-L-serine + H2O = 2-(9Z-octadecenoyl)-sn-glycero-3-phospho-L-serine + hexadecanoate + H(+). It carries out the reaction 1,2-di-(9Z-octadecenoyl)-sn-glycero-3-phosphocholine + H2O = (9Z-octadecenoyl)-sn-glycero-3-phosphocholine + (9Z)-octadecenoate + H(+). The enzyme catalyses a 1,2-diacyl-sn-glycero-3-phosphocholine + H2O = a 1-acyl-sn-glycero-3-phosphocholine + a fatty acid + H(+). It catalyses the reaction 1,2-dihexadecanoyl-sn-glycero-3-phosphocholine + H2O = 1-hexadecanoyl-sn-glycero-3-phosphocholine + hexadecanoate + H(+). Inhibited by E-6-bromomethylene-3-1-naphthalenyl-2H-tetrahydropyran-2-one (BEL) in vitro. Its function is as follows. Hydrolyzes the ester bond at the sn-1 position of glycerophospholipids and produces 2-acyl lysophospholipids, being phosphatidylinositol (PI) its major substrate. PI is a versatile lipid that not only serves as a structural component of cellular membranes, but also plays important roles in signal transduction through distinct phosphorylated derivatives of the inositol head group. Catalyzes the hydrolysis of phosphatidylcholine at sn-2 position in vitro. Regulates asymmetric division, an important property of stem cells in C.elegans, by controlling the subcellular localizations of beta-catenin. The polypeptide is Intracellular phospholipase A1 (Caenorhabditis elegans).